The following is a 710-amino-acid chain: Polyribonucleotide nucleotidyltransferase (710 aa).

The Mg(2+) site is built by Asp-487 and Asp-493. Residues 554-613 form the KH domain; that stretch reads PRIHTMKISAEKIKDVIGKGGAVIRALTEETGTTIEIEDDGTIKIAATEGAAAKEAIRRI. The 69-residue stretch at 623–691 folds into the S1 motif domain; the sequence is GRIYTGKVAR…RQGRVRLSMK (69 aa). The tract at residues 691 to 710 is disordered; the sequence is KEAVEKPAEEANDASEAKGE.

It belongs to the polyribonucleotide nucleotidyltransferase family. In terms of assembly, component of the RNA degradosome, which is a multiprotein complex involved in RNA processing and mRNA degradation. The cofactor is Mg(2+).

The protein localises to the cytoplasm. It carries out the reaction RNA(n+1) + phosphate = RNA(n) + a ribonucleoside 5'-diphosphate. In terms of biological role, involved in mRNA degradation. Catalyzes the phosphorolysis of single-stranded polyribonucleotides processively in the 3'- to 5'-direction. This Vibrio campbellii (strain ATCC BAA-1116) protein is Polyribonucleotide nucleotidyltransferase.